Here is a 252-residue protein sequence, read N- to C-terminus: 3-deoxy-manno-octulosonate cytidylyltransferase (252 aa).

It belongs to the KdsB family.

It localises to the cytoplasm. It catalyses the reaction 3-deoxy-alpha-D-manno-oct-2-ulosonate + CTP = CMP-3-deoxy-beta-D-manno-octulosonate + diphosphate. Its pathway is nucleotide-sugar biosynthesis; CMP-3-deoxy-D-manno-octulosonate biosynthesis; CMP-3-deoxy-D-manno-octulosonate from 3-deoxy-D-manno-octulosonate and CTP: step 1/1. The protein operates within bacterial outer membrane biogenesis; lipopolysaccharide biosynthesis. Its function is as follows. Activates KDO (a required 8-carbon sugar) for incorporation into bacterial lipopolysaccharide in Gram-negative bacteria. This chain is 3-deoxy-manno-octulosonate cytidylyltransferase, found in Vibrio campbellii (strain ATCC BAA-1116).